Here is a 127-residue protein sequence, read N- to C-terminus: Copper resistance protein C (127 aa).

A signal peptide spans 1–25 (MFAFRSIATTVVMVAASLASASAFA). Residues His-26, Met-65, Met-68, Met-71, Met-76, and His-116 each contribute to the Cu cation site.

It belongs to the CopC family.

It localises to the periplasm. In terms of biological role, copper-binding protein involved in copper resistance. This is Copper resistance protein C from Xanthomonas campestris pv. juglandis (Xanthomonas arboricola pv. juglandis).